Reading from the N-terminus, the 96-residue chain is Muconolactone Delta-isomerase (96 aa).

This sequence belongs to the muconolactone Delta-isomerase family. As to quaternary structure, homodecamer.

It catalyses the reaction (S)-muconolactone = (4,5-dihydro-5-oxofuran-2-yl)-acetate. Its pathway is aromatic compound metabolism; beta-ketoadipate pathway; 5-oxo-4,5-dihydro-2-furylacetate from catechol: step 3/3. The polypeptide is Muconolactone Delta-isomerase (catC) (Acinetobacter baylyi (strain ATCC 33305 / BD413 / ADP1)).